The chain runs to 797 residues: Inulosucrase (797 aa).

The N-terminal stretch at 1–36 (MLENKNHKKISLSGKSLLMGTLSTAAIVLSASTANA) is a signal peptide. The segment covering 54-64 (ASSVNNENNKQ) has biased composition (polar residues). Residues 54 to 176 (ASSVNNENNK…SVKPAENATK (123 aa)) form a disordered region. Composition is skewed to basic and acidic residues over residues 65–75 (VTEKDSADKST) and 82–95 (ANTKKSNENTETTE). The segment covering 130–139 (DQKTTNAATT) has biased composition (low complexity). A compositionally biased stretch (basic and acidic residues) spans 140–167 (DTKKDDVKQVEKKDSVDKTNAEENKDSS). Trp271 contacts substrate. The active-site Nucleophile is Asp272. A Ca(2+)-binding site is contributed by Asn317. Substrate is bound at residue Ser340. A Ca(2+)-binding site is contributed by Asp419. Residue 424-425 (RD) coordinates substrate. The Ca(2+) site is built by Gln450, Trp487, Asn489, and Asp521. Residues 522-524 (EIE) and Arg542 each bind substrate. Glu524 functions as the Proton donor/acceptor in the catalytic mechanism. The Ca(2+) site is built by Asp660, Ile662, and Ser667. The interval 708–766 (QPVTPIPNVPTTPETPTTPDKPEVPTTPEVPTTPETPTPEAPKNPVKKTSQSKLPKAGD) is disordered. Over residues 718-740 (TTPETPTTPDKPEVPTTPEVPTT) the composition is skewed to low complexity. Residues 761-765 (LPKAG) carry the LPXTG sorting signal motif. At Ala764 the chain carries Pentaglycyl murein peptidoglycan amidated alanine. Positions 765–797 (GDKNSFAAVVLGAVSSILGAVGLTGVSKRKRNN) are cleaved as a propeptide — removed by sortase.

This sequence belongs to the glycosyl hydrolase 68 family. Ca(2+) is required as a cofactor.

It localises to the secreted. It is found in the cell wall. The catalysed reaction is [(2-&gt;1)-beta-D-fructosyl](n) + sucrose = [(2-&gt;1)-beta-D-fructosyl](n+1) + D-glucose. Its function is as follows. Fructosyltransferase that catalyzes the polymerization of the fructose moiety of sucrose to produce inulin polymer and inulin oligosaccharides such as 1-kestose and nystose. The polypeptide is Inulosucrase (Lactobacillus johnsonii (strain CNCM I-12250 / La1 / NCC 533)).